Here is an 891-residue protein sequence, read N- to C-terminus: MAPKQKKKSSRRKKSPKPILAASEDMEPVNMESMGHPEIYPLVLTTKTQEIFNCRIDEDITDEQPYKLINKEDIFEDLRNRAAVSDFHPVKKIVQEYPGNELLLVYDKDFKYGLNFYLIGTEEGEENYLNPPEVSEEQEEYKEYIPEDVYIYKPPVSKPWVSLGSEKEIEEESVTESTKQITYMISRKRSEFGAPIKFSDQNASSVKDAYIECTAYPDKNFTLKQLEKDVGMQVIPQIKDISTQTKWTYPKNATTQYYPREFSEEEKETLKQSKPLVDFLNNASISVEIALQQNEITNTFIDDWKHLAEEEGTFGDKTDTHLKEYQSFTDLHSPTEKMITCVSWHPTIYGLIAVSVAVRLSFEDRVHFSGKLLLQPSLILFWSFSDPIHPQLMLESPDDIFCFKFCPSDPNIIAGGCINGQIVMWDITAHADRIENIKGGGSRSKKATLKPMFLLEPESNKEAMYIRHCAVSSIENGHKRVITDIHWLSDTFEINRMGSVFENRSGICCQLVTCSADCTICFWDIRPQKPLTPQTTEKKKEESIEIPFDVPSTFLHLDLSWKPLTKLKLSKGETSLDHCPTKISLNEDHLLCKTQDKMLAQSKTAKAEEMNPYHNLESGVANLLKPIDDFCTKFFVGTEEGEVIYTDWKMERDPETGRFMPKKPVNLHTIHDGIVHTIQRSPFYDDIILTVGGWNVAIWKESVMTGPLLQSCCAPKRYTSGHWSLTRPGVFYIGREDGYIDIWDLLEKTHEPAQSQNICITMITCIKPWIFSPKQQFIAIADYYGTLHILEIPWTLSHPSANEMASINHYFEREVKHLEYVEQRKKIREQEKKEMEQEMAKKKVKIYQKSKEQMEAELKMDYESYLELEKTVLINLGLIKVTEKGSYLDVM.

Over residues 1–16 the composition is skewed to basic residues; the sequence is MAPKQKKKSSRRKKSP. The interval 1–27 is disordered; sequence MAPKQKKKSSRRKKSPKPILAASEDME. 4 WD repeats span residues 395 to 435, 477 to 533, 670 to 709, and 713 to 753; these read ESPD…DRIE, GHKR…PLTP, IHDG…GPLL, and CAPK…HEPA. A coiled-coil region spans residues 817–861; sequence HLEYVEQRKKIREQEKKEMEQEMAKKKVKIYQKSKEQMEAELKMD.

As to quaternary structure, interacts with ACTR2; this interaction reduces binding of the Arp2/3 complex to the VCA domain of nucleation promoting factors. Part of the multisubunit axonemal dynein complex formed at least of two heavy chains and a number of intermediate and light chains. Found in a associated with the catalytic heavy chain DNAH2, the intermediate chain DNAI4, and the light chain DYNLT1.

Its subcellular location is the cytoplasm. Its function is as follows. Acts as a negative regulator of cell migration, invasion, and metastasis downstream of p53/TP53, through inhibition of Arp2/3 complex-mediated actin polymerization. Via its association with the multisubunit axonemal dynein complex, is potentially involved in the regulation of cilia function. May play a role in osteogenesis of dental tissue-derived mesenchymal stem cells. The protein is Dynein axonemal intermediate chain 3 (DNAI3) of Macaca fascicularis (Crab-eating macaque).